The sequence spans 283 residues: V-set domain containing T-cell activation inhibitor 1 (283 aa).

Positions 1 to 24 (MASLGQIIFWSIINIIIILAGAIA) are cleaved as a signal peptide. Ig-like V-type domains lie at 35–144 (HFIT…ANLE) and 153–241 (PEIN…IKVT). 2 cysteine pairs are disulfide-bonded: Cys56–Cys130 and Cys168–Cys225. A glycan (N-linked (GlcNAc...) asparagine) is linked at Asn216. Gly257 is lipidated: GPI-anchor amidated glycine. The propeptide at 258–283 (PSPCVFSSAFVAGWALLSLSCCLMLR) is removed in mature form.

It belongs to the immunoglobulin superfamily. BTN/MOG family. In terms of processing, N-glycosylated. Expressed on the surface of professional antigen-presenting cells (at protein level). Widely expressed, including in kidney, liver, lung, pancreas, placenta, prostate, spleen, testis and thymus.

It is found in the cell membrane. In terms of biological role, negatively regulates T-cell-mediated immune response by inhibiting T-cell activation, proliferation, cytokine production and development of cytotoxicity. When expressed on the cell surface of tumor macrophages, plays an important role, together with regulatory T-cells (Treg), in the suppression of tumor-associated antigen-specific T-cell immunity. Involved in promoting epithelial cell transformation. The sequence is that of V-set domain containing T-cell activation inhibitor 1 from Mus musculus (Mouse).